Here is a 146-residue protein sequence, read N- to C-terminus: Hemoglobin subunit beta-1 (146 aa).

The Globin domain occupies 2–146; sequence EWTDKERAII…VVSALGKQYH (145 aa). His63 and His92 together coordinate heme b.

This sequence belongs to the globin family. As to quaternary structure, hb 1 is a heterotetramer of two alpha-1 and two beta-1 chains. As to expression, red blood cells.

Its function is as follows. Involved in oxygen transport from gills to the various peripheral tissues. In Gobionotothen gibberifrons (Humped rockcod), this protein is Hemoglobin subunit beta-1 (hbb1).